An 87-amino-acid polypeptide reads, in one-letter code: Small ribosomal subunit protein bS16 (87 aa).

Belongs to the bacterial ribosomal protein bS16 family.

This is Small ribosomal subunit protein bS16 from Aster yellows witches'-broom phytoplasma (strain AYWB).